We begin with the raw amino-acid sequence, 80 residues long: Cell division activator CedA (80 aa).

It belongs to the CedA family.

In terms of biological role, activates the cell division inhibited by chromosomal DNA over-replication. The sequence is that of Cell division activator CedA from Escherichia coli (strain SMS-3-5 / SECEC).